A 123-amino-acid polypeptide reads, in one-letter code: Putative iron-sulfur cluster insertion protein ErpA (123 aa).

Iron-sulfur cluster-binding residues include C51, C115, and C117.

It belongs to the HesB/IscA family. As to quaternary structure, homodimer. Requires iron-sulfur cluster as cofactor.

Required for insertion of 4Fe-4S clusters. The polypeptide is Putative iron-sulfur cluster insertion protein ErpA (Bordetella avium (strain 197N)).